Here is a 283-residue protein sequence, read N- to C-terminus: SNF1-related protein kinase regulatory subunit beta-1 (283 aa).

The segment covering 1–10 (MGNANGKDED) has biased composition (basic and acidic residues). A disordered region spans residues 1-63 (MGNANGKDED…PARSPSPFLF (63 aa)). A lipid anchor (N-myristoyl glycine) is attached at Gly2. Residues 43–60 (SDSMSSSPPGSPARSPSP) are compositionally biased toward low complexity. Residues 101 to 178 (PTIITWNQGG…VGNVCNILDV (78 aa)) form a kinase-interacting sequence (KIS) region. The tract at residues 215–283 (EPLAVPPQLH…TVVLYKPLTR (69 aa)) is association with SNF1 complex (ASC).

The protein belongs to the 5'-AMP-activated protein kinase beta subunit family. In terms of assembly, subunit of a probable heterotrimeric complex consisting of an alpha catalytic (KIN10 or KIN11) subunit, and a beta (KINB) and a gamma (KING or SNF4) non-catalytic regulatory subunits. Interacts with SNF4 and CBL1. Interacts with FLZ1, FLZ2, FLZ8, FLZ9, FLZ10, FLZ12, FLZ13, FLZ14 and FLZ15. In terms of processing, sumoylated by SIZ1. As to expression, expressed in vegetative organs and, to lower extent, in reproductive organs.

Its subcellular location is the cell membrane. Its function is as follows. Regulatory subunit of the probable trimeric SNF1-related protein kinase (SnRK) complex, which may play a role in a signal transduction cascade regulating gene expression and carbohydrate metabolism in higher plants. The SnRK complex may also be involved in the regulation of fatty acid synthesis by phosphorylation of acetyl-CoA carboxylase and in assimilation of nitrogen by phosphorylating nitrate reductase. In Arabidopsis thaliana (Mouse-ear cress), this protein is SNF1-related protein kinase regulatory subunit beta-1 (KINB1).